The sequence spans 208 residues: Potassium-transporting ATPase KdpC subunit (208 aa).

A helical transmembrane segment spans residues 6–26; sequence PALLVSIVLLVVCGLVYPLVL.

Belongs to the KdpC family. As to quaternary structure, the system is composed of three essential subunits: KdpA, KdpB and KdpC.

It localises to the cell membrane. Part of the high-affinity ATP-driven potassium transport (or Kdp) system, which catalyzes the hydrolysis of ATP coupled with the electrogenic transport of potassium into the cytoplasm. This subunit acts as a catalytic chaperone that increases the ATP-binding affinity of the ATP-hydrolyzing subunit KdpB by the formation of a transient KdpB/KdpC/ATP ternary complex. In Clostridioides difficile (strain 630) (Peptoclostridium difficile), this protein is Potassium-transporting ATPase KdpC subunit.